A 469-amino-acid polypeptide reads, in one-letter code: Aspartyl/glutamyl-tRNA(Asn/Gln) amidotransferase subunit B (469 aa).

The protein belongs to the GatB/GatE family. GatB subfamily. In terms of assembly, heterotrimer of A, B and C subunits.

It catalyses the reaction L-glutamyl-tRNA(Gln) + L-glutamine + ATP + H2O = L-glutaminyl-tRNA(Gln) + L-glutamate + ADP + phosphate + H(+). It carries out the reaction L-aspartyl-tRNA(Asn) + L-glutamine + ATP + H2O = L-asparaginyl-tRNA(Asn) + L-glutamate + ADP + phosphate + 2 H(+). In terms of biological role, allows the formation of correctly charged Asn-tRNA(Asn) or Gln-tRNA(Gln) through the transamidation of misacylated Asp-tRNA(Asn) or Glu-tRNA(Gln) in organisms which lack either or both of asparaginyl-tRNA or glutaminyl-tRNA synthetases. The reaction takes place in the presence of glutamine and ATP through an activated phospho-Asp-tRNA(Asn) or phospho-Glu-tRNA(Gln). This chain is Aspartyl/glutamyl-tRNA(Asn/Gln) amidotransferase subunit B, found in Methanococcus maripaludis (strain C6 / ATCC BAA-1332).